Reading from the N-terminus, the 628-residue chain is Probable potassium transport system protein Kup (628 aa).

12 helical membrane passes run 15–35 (LAIA…LYSL), 55–75 (VISL…VLFV), 104–124 (AGLL…DAVI), 142–162 (PHLS…LFWI), 173–193 (LFGP…LWHI), 210–230 (TFMA…VLVL), 252–272 (WYVL…ALLM), 281–301 (PFFL…STIA), 342–362 (IYVP…VIAF), 372–392 (YGIA…VVMV), 400–420 (LLVA…FGAN), and 426–446 (EGGW…MTWY).

It belongs to the HAK/KUP transporter (TC 2.A.72) family.

The protein localises to the cell inner membrane. It catalyses the reaction K(+)(in) + H(+)(in) = K(+)(out) + H(+)(out). Transport of potassium into the cell. Likely operates as a K(+):H(+) symporter. The polypeptide is Probable potassium transport system protein Kup (Paraburkholderia xenovorans (strain LB400)).